A 222-amino-acid chain; its full sequence is Adenylate kinase (222 aa).

Ser-2 is a propeptide (removed in mature form). Residues Ser-2 and Ser-3 each carry the N-acetylserine modification. Residue 16–21 coordinates ATP; it reads GAGKGT. An NMP region spans residues 36-65; that stretch reads ATGDMLRSQIAKGTQLGLEAKKIMDQGGLV. Residues Thr-37, Arg-42, 63 to 65, 92 to 95, and Gln-99 each bind AMP; these read GLV and GFPR. The interval 133 to 170 is LID; it reads GRLIHPASGRSYHKIFNPPKEDMKDDVTGEALVQRSDD. Residues Arg-134 and 143-144 contribute to the ATP site; that span reads SY. Residues Arg-167 and Arg-178 each contribute to the AMP site. Gln-206 serves as a coordination point for ATP.

Belongs to the adenylate kinase family. AK2 subfamily. Monomer.

It localises to the cytoplasm. Its subcellular location is the cytosol. The protein localises to the mitochondrion intermembrane space. The enzyme catalyses AMP + ATP = 2 ADP. Its function is as follows. Catalyzes the reversible transfer of the terminal phosphate group between ATP and AMP. Plays an important role in cellular energy homeostasis and in adenine nucleotide metabolism. Adenylate kinase activity is critical for regulation of the phosphate utilization and the AMP de novo biosynthesis pathways. This Saccharomyces cerevisiae (strain YJM789) (Baker's yeast) protein is Adenylate kinase.